The chain runs to 1190 residues: DNA-directed RNA polymerase subunit beta (1190 aa).

The protein belongs to the RNA polymerase beta chain family. In terms of assembly, the RNAP catalytic core consists of 2 alpha, 1 beta, 1 beta' and 1 omega subunit. When a sigma factor is associated with the core the holoenzyme is formed, which can initiate transcription.

The catalysed reaction is RNA(n) + a ribonucleoside 5'-triphosphate = RNA(n+1) + diphosphate. In terms of biological role, DNA-dependent RNA polymerase catalyzes the transcription of DNA into RNA using the four ribonucleoside triphosphates as substrates. The polypeptide is DNA-directed RNA polymerase subunit beta (Streptococcus suis (strain 98HAH33)).